Here is a 340-residue protein sequence, read N- to C-terminus: Protein S-acyltransferase 10 (340 aa).

The next 2 helical transmembrane spans lie at 34 to 54 (LLLK…LFLF) and 66 to 86 (PWYM…YFVT). In terms of domain architecture, DHHC spans 162-212 (LTCGYCHVEQPPRTKHCHDCDRCVLQFDHHCVWLGTCIGQKNHSKFWWYIC). Cysteine 192 acts as the S-palmitoyl cysteine intermediate in catalysis. 2 helical membrane passes run 207–227 (FWWY…MYVD) and 241–261 (IIIL…LLLI).

This sequence belongs to the DHHC palmitoyltransferase family. In terms of tissue distribution, expressed in mature embryos, embryo sacs, cotyledons, whole seedlings, hydathodes, guard cells, sites of lateral root initiation, root tips and phloem, but not in xylem.

It is found in the vacuole membrane. The catalysed reaction is L-cysteinyl-[protein] + hexadecanoyl-CoA = S-hexadecanoyl-L-cysteinyl-[protein] + CoA. S-acyltransferase involved in protein lipid modification. Catalyzes the palmitoylation of proteins peripheral or integral to the tonoplast. Required for the tonoplast localization of CBL2, CBL3 and CBL6, but not for the plasma membrane localization of CBL9, for the endosome localization of RABF1 or for the endomembrane localization of RABF2B. This chain is Protein S-acyltransferase 10 (PAT10), found in Arabidopsis thaliana (Mouse-ear cress).